A 779-amino-acid polypeptide reads, in one-letter code: Phosphatidylinositol 4-phosphate 5-kinase 4 (779 aa).

A disordered region spans residues 20 to 61 (QQAKKRANSIFGTVSVAPQTDDDATTTTEENDDETSTNRSSI). Positions 39–54 (TDDDATTTTEENDDET) are enriched in acidic residues. 8 MORN repeats span residues 77-99 (YTGQ…DGCM), 100-122 (YIGD…SGAT), 123-145 (YEGE…SGDT), 146-168 (YKGQ…NGDV), 169-191 (YDGE…DGSY), 192-214 (YMGE…DGNR), 215-237 (YDGF…DGSF), and 238-259 (YVGH…SGDD). Positions 382–775 (TISKGHRNYE…RFRDFIFKVF (394 aa)) constitute a PIPK domain. An activation loop region spans residues 735–756 (YDISKKLEHAYKSIQYDPTSIS).

The enzyme catalyses a 1,2-diacyl-sn-glycero-3-phospho-(1D-myo-inositol 4-phosphate) + ATP = a 1,2-diacyl-sn-glycero-3-phospho-(1D-myo-inositol-4,5-bisphosphate) + ADP + H(+). The protein is Phosphatidylinositol 4-phosphate 5-kinase 4 (PIP5K4) of Arabidopsis thaliana (Mouse-ear cress).